We begin with the raw amino-acid sequence, 97 residues long: Eotaxin (97 aa).

Positions 1–23 (MQSSTALLFLLLTVTSFTSQVLA) are cleaved as a signal peptide. Disulfide bonds link Cys32–Cys57 and Cys33–Cys73. Residue Thr94 is glycosylated (O-linked (GalNAc...) threonine).

This sequence belongs to the intercrine beta (chemokine CC) family. In terms of tissue distribution, expressed constitutively in the thymus. Expression inducible in the lung (type I alveolar epithelial cells), intestine, heart, spleen, kidney.

The protein resides in the secreted. Its function is as follows. In response to the presence of allergens, this protein directly promotes the accumulation of eosinophils (a prominent feature of allergic inflammatory reactions), but not lymphocytes, macrophages or neutrophils. Binds to CCR3. This chain is Eotaxin (Ccl11), found in Mus musculus (Mouse).